A 634-amino-acid chain; its full sequence is DNA-directed RNA polymerase subunit gamma (634 aa).

Zn(2+)-binding residues include Cys74, Cys76, Cys89, and Cys92. Mg(2+)-binding residues include Asp471, Asp473, and Asp475.

The protein belongs to the RNA polymerase beta' chain family. RpoC1 subfamily. As to quaternary structure, in cyanobacteria the RNAP catalytic core is composed of 2 alpha, 1 beta, 1 beta', 1 gamma and 1 omega subunit. When a sigma factor is associated with the core the holoenzyme is formed, which can initiate transcription. It depends on Mg(2+) as a cofactor. Zn(2+) serves as cofactor.

The catalysed reaction is RNA(n) + a ribonucleoside 5'-triphosphate = RNA(n+1) + diphosphate. Functionally, DNA-dependent RNA polymerase catalyzes the transcription of DNA into RNA using the four ribonucleoside triphosphates as substrates. This Prochlorococcus marinus (strain MIT 9515) protein is DNA-directed RNA polymerase subunit gamma.